The primary structure comprises 165 residues: Large ribosomal subunit protein uL10 (165 aa).

It belongs to the universal ribosomal protein uL10 family. As to quaternary structure, part of the ribosomal stalk of the 50S ribosomal subunit. The N-terminus interacts with L11 and the large rRNA to form the base of the stalk. The C-terminus forms an elongated spine to which L12 dimers bind in a sequential fashion forming a multimeric L10(L12)X complex.

In terms of biological role, forms part of the ribosomal stalk, playing a central role in the interaction of the ribosome with GTP-bound translation factors. This chain is Large ribosomal subunit protein uL10, found in Edwardsiella ictaluri (strain 93-146).